A 376-amino-acid polypeptide reads, in one-letter code: Multiphosphoryl transfer protein (376 aa).

A PTS EIIA type-2 domain is found at 2–142 (FQLSVQDIHP…EELRALLMGE (141 aa)). His62 (tele-phosphohistidine intermediate; for EIIA activity) is an active-site residue. His62 bears the Phosphohistidine; by HPr mark. Residues 156-284 (TLDIVASDLL…LTSDDAPTDD (129 aa)) are m domain. In terms of domain architecture, HPr spans 285 to 375 (VLSAEFVVRN…DAIAAGLGEG (91 aa)). Residue His299 is the Pros-phosphohistidine intermediate; for HPr activity of the active site. The residue at position 299 (His299) is a Phosphohistidine; by EI.

The protein localises to the cytoplasm. Functionally, the phosphoenolpyruvate-dependent sugar phosphotransferase system (sugar PTS), a major carbohydrate active transport system, catalyzes the phosphorylation of incoming sugar substrates concomitantly with their translocation across the cell membrane. The enzyme II FruAB PTS system is involved in fructose transport. This Escherichia coli O157:H7 protein is Multiphosphoryl transfer protein.